A 98-amino-acid chain; its full sequence is Co-chaperonin GroES (98 aa).

This sequence belongs to the GroES chaperonin family. Heptamer of 7 subunits arranged in a ring. Interacts with the chaperonin GroEL.

Its subcellular location is the cytoplasm. Functionally, together with the chaperonin GroEL, plays an essential role in assisting protein folding. The GroEL-GroES system forms a nano-cage that allows encapsulation of the non-native substrate proteins and provides a physical environment optimized to promote and accelerate protein folding. GroES binds to the apical surface of the GroEL ring, thereby capping the opening of the GroEL channel. The protein is Co-chaperonin GroES of Rhizobium leguminosarum bv. trifolii (strain WSM2304).